We begin with the raw amino-acid sequence, 88 residues long: DNA-directed RNA polymerase subunit omega (88 aa).

Belongs to the RNA polymerase subunit omega family. The RNAP catalytic core consists of 2 alpha, 1 beta, 1 beta' and 1 omega subunit. When a sigma factor is associated with the core the holoenzyme is formed, which can initiate transcription.

The catalysed reaction is RNA(n) + a ribonucleoside 5'-triphosphate = RNA(n+1) + diphosphate. Functionally, promotes RNA polymerase assembly. Latches the N- and C-terminal regions of the beta' subunit thereby facilitating its interaction with the beta and alpha subunits. The chain is DNA-directed RNA polymerase subunit omega from Haemophilus influenzae (strain PittEE).